The primary structure comprises 1215 residues: Protein benign gonial cell neoplasm (1215 aa).

One copy of the ANK repeat lies at 407-439 (TGKTAVHFASELNKANHLRLLLFMGADPYIVDL). A Phosphothreonine modification is found at Thr-898.

As to quaternary structure, part of a complex composed of at least mei-P26, bam, bgcn and Sxl; this complex is involved in translational repression of nanos mRNA. Interacts with bam (via C-terminus); the interaction is direct. Interacts with mei-P26; the interaction is direct and does not require bam. Weakly interacts with wh/wuho; this interaction may be required for the function or formation of the mei-P26-bgcn-bam-Sxl complex. Part of a complex composed of at least tut, bam and bgcn; complex formation does not require RNA. Interacts with tut; the interaction is indirect and is mediated by bam. As part of the bam-bgcn-tut complex associates with twin; may recruit the CCR4-NOT1 deadenylation complex to mRNA 3'UTRs to mediate post-transcriptional regulation of expression. Expressed in testis and in 5-8 germline stem cells of ovaries, immediately adjacent to terminal filament. Expressed in ovarian germline cells throughout the germarium (at protein level).

Forms a complex with tut and bam involved in 3'UTR-dependent post-transcriptional repression of several 3'-RNA processing factors, which promotes germline stem cell lineage differentiation and mitosis-to-meiosis transition. Part of a complex with bam involved in 3'-UTR-dependent translational repression of a subset of mRNAs, including those for mei-P26, nanos and shg/E-cadherin; may act as a promiscuous RNA-binding protein tethering bam to its target mRNAs. Required for regulating the progression of gonialblast cells through transit amplification and differentiation into gametes. The sequence is that of Protein benign gonial cell neoplasm from Drosophila melanogaster (Fruit fly).